We begin with the raw amino-acid sequence, 206 residues long: Outer-membrane lipoprotein carrier protein (206 aa).

The N-terminal stretch at 1–23 (MKPLFPMLTAAAIAAGLAAPAQA) is a signal peptide.

It belongs to the LolA family. Monomer.

It localises to the periplasm. Participates in the translocation of lipoproteins from the inner membrane to the outer membrane. Only forms a complex with a lipoprotein if the residue after the N-terminal Cys is not an aspartate (The Asp acts as a targeting signal to indicate that the lipoprotein should stay in the inner membrane). In Chromobacterium violaceum (strain ATCC 12472 / DSM 30191 / JCM 1249 / CCUG 213 / NBRC 12614 / NCIMB 9131 / NCTC 9757 / MK), this protein is Outer-membrane lipoprotein carrier protein.